The sequence spans 666 residues: NADH-ubiquinone oxidoreductase chain 5 (666 aa).

17 helical membrane-spanning segments follow: residues 3-23 (LLIL…GRWL), 31-51 (FSTL…FEIG), 59-78 (IFLV…GFLF), 82-101 (TVTM…IYSI), 119-139 (IFTF…MFLG), 168-190 (LIVN…WVFN), 211-231 (FLGF…IGAI), 251-271 (TPVS…FLMI), 283-303 (ILFI…VTGV), 311-333 (VIAY…SCYD), 337-357 (FHLA…GSVI), 375-395 (FMPL…GFPF), 421-441 (YISF…FYSF), 467-487 (LLMI…GYLI), 524-544 (WLPF…QIFL), 572-594 (VLYN…FKIL), and 629-649 (YLFF…YSYI).

The protein belongs to the complex I subunit 5 family.

The protein resides in the mitochondrion inner membrane. The enzyme catalyses a ubiquinone + NADH + 5 H(+)(in) = a ubiquinol + NAD(+) + 4 H(+)(out). Functionally, core subunit of the mitochondrial membrane respiratory chain NADH dehydrogenase (Complex I) that is believed to belong to the minimal assembly required for catalysis. Complex I functions in the transfer of electrons from NADH to the respiratory chain. The immediate electron acceptor for the enzyme is believed to be ubiquinone. The chain is NADH-ubiquinone oxidoreductase chain 5 (ND5) from Chondrus crispus (Carrageen Irish moss).